Reading from the N-terminus, the 373-residue chain is Probable G-protein coupled receptor 45 (373 aa).

Over 1–38 (MACNSTPMGTYEHLLLNVSNTLDPGDTPLSAPLRISLA) the chain is Extracellular. N-linked (GlcNAc...) asparagine glycosylation occurs at Asn-17. A helical membrane pass occupies residues 39-59 (IMMLLMIVVGFLGNTVVCIIV). At 60 to 75 (YQRPAMRSAINLLLAT) the chain is on the cytoplasmic side. The helical transmembrane segment at 76-96 (LAFSDIMLSLCCMPFTAITLI) threads the bilayer. The Extracellular portion of the chain corresponds to 97 to 109 (TVRWHFGDHFCRL). A helical membrane pass occupies residues 110–130 (SATLYWFFVLEGVAILLIISV). Over 131–149 (DRFLIIVQRQDKLNPRRAK) the chain is Cytoplasmic. Residues 150-170 (MIIAASWVLSFCISAPSFTGW) traverse the membrane as a helical segment. Residues 171–198 (TFMEVPARAPQCVLGYTEFPAERAYVVT) lie on the Extracellular side of the membrane. A helical transmembrane segment spans residues 199-219 (LVVAVFFAPFGVMLCSYLCIL). Residues 220 to 269 (NTVRKNAVRVHNQSDSLDLRQLTGAGLRRLRRQQQQASLDLSFKTKAFTT) are Cytoplasmic-facing. Residues 270–290 (ILILFVGFSLCWLPHSVYSLL) form a helical membrane-spanning segment. The Extracellular segment spans residues 291-306 (SAFSRRFYYSASFYTT). Residues 307–327 (STCVLWLSYLKSVFNPIVYCW) form a helical membrane-spanning segment. Over 328–373 (RIKKFREACIELLPHTFQILPKVPERIQRKIQPSTIYVCNENQSAV) the chain is Cytoplasmic.

This sequence belongs to the G-protein coupled receptor 1 family. As to expression, brain specific.

It localises to the cell membrane. Its function is as follows. Orphan receptor. May play a role in brain function. The chain is Probable G-protein coupled receptor 45 (Gpr45) from Mus musculus (Mouse).